We begin with the raw amino-acid sequence, 428 residues long: Cytokine-dependent hematopoietic cell linker (428 aa).

A disordered region spans residues 1–22 (MNRQGNRKTTKEGSNDLKFQNF). Phosphotyrosine; by LYN is present on residues tyrosine 69 and tyrosine 96. 2 disordered regions span residues 135 to 198 (DKPI…EVQR) and 244 to 271 (SSSFTTSNHSVQNRDHRGGMQPCSPQRC). The mediates interaction with PLCG1; essential for BCR signaling; involved in restoration of BCR-induced calcium response and ERK2 and JNK2 activation in BLNK-deficient cells expressing LAT stretch occupies residues 159-164 (PLPPPR). A mediates interaction with LAT, GRB2, and FGR; involved in translocation to the glycolipid-enriched microdomain and restoration of BCR-induced calcium response in BLNK-deficient DT40 cells expressing LAT region spans residues 178–180 (PEP). Positions 244-253 (SSSFTTSNHS) are enriched in low complexity. In terms of domain architecture, SH2 spans 309-419 (WYIGEYSRQA…RKQCHLTQPL (111 aa)).

As to quaternary structure, when phosphorylated, interacts with PLCG1, PLCG2, GRB2, VAV and LAT. Interacts with LBR and AGO2. Interacts with FGR. Part of a complex consisting of CLNK, SKAP1 and FYB1. Interacts (via SH2 domain) with FYB1; this interaction allows SKAP1 and FYB1 to promote tyrosine phosphorylation of CLNK by LYN. Interacts (via SH2 domain) with MAP4K1. Tyrosine-phosphorylated upon BCR cross-linking. Tyrosine phosphorylation at both Tyr-69 and Tyr-96 are required for BCR-induced calcium response and are essential to restore PLCG2-mediated signaling in BLNK-deficient DT40 cells, but this phosphorylation is dispensable in cells expressing LAT. Interacts with the SH2 domain of PLCG1 via phosphorylated Tyr-96. Tyrosine phosphorylation is increased when complexed with SKAP1 and FYB1.

It localises to the cytoplasm. Functionally, an adapter protein which plays a role in the regulation of immunoreceptor signaling, including PLC-gamma-mediated B-cell antigen receptor (BCR) signaling and FC-epsilon R1-mediated mast cell degranulation. Together with FGR, it acts as a negative regulator of natural killer cell-activating receptors and inhibits interferon-gamma production. Acts as a positive regulator of both T-cell receptor and natural killer T (NKT) cell receptor signaling in CD4-positive NKT cells. Together with MAP4K1, it enhances CD3-triggered activation of T-cells and subsequent IL2 production. May be involved in tumor necrosis factor induced cell death by promoting reactive oxidative species generation, and MLKL oligomerization, ultimately leading to necrosis. Involved in phosphorylation of LAT. May be involved in high affinity immunoglobulin epsilon receptor signaling in mast cells. The polypeptide is Cytokine-dependent hematopoietic cell linker (CLNK) (Homo sapiens (Human)).